We begin with the raw amino-acid sequence, 357 residues long: Beta-hexosaminidase (357 aa).

Substrate is bound by residues Asp-66, Arg-74, Arg-140, and 170–171 (KH). Residue His-183 is the Proton donor/acceptor of the active site. Asp-254 serves as the catalytic Nucleophile.

This sequence belongs to the glycosyl hydrolase 3 family. NagZ subfamily.

The protein localises to the cytoplasm. It catalyses the reaction Hydrolysis of terminal non-reducing N-acetyl-D-hexosamine residues in N-acetyl-beta-D-hexosaminides.. The protein operates within cell wall biogenesis; peptidoglycan recycling. Functionally, plays a role in peptidoglycan recycling by cleaving the terminal beta-1,4-linked N-acetylglucosamine (GlcNAc) from peptide-linked peptidoglycan fragments, giving rise to free GlcNAc, anhydro-N-acetylmuramic acid and anhydro-N-acetylmuramic acid-linked peptides. In Chromobacterium violaceum (strain ATCC 12472 / DSM 30191 / JCM 1249 / CCUG 213 / NBRC 12614 / NCIMB 9131 / NCTC 9757 / MK), this protein is Beta-hexosaminidase.